The primary structure comprises 284 residues: Probable protein phosphatase 2C 41 (284 aa).

Residues 35–282 (SYGFYLVRGM…DDISCVVVRF (248 aa)) form the PPM-type phosphatase domain. Mn(2+)-binding residues include D72, G73, D234, and D273.

This sequence belongs to the PP2C family. Requires Mg(2+) as cofactor. Mn(2+) is required as a cofactor.

The catalysed reaction is O-phospho-L-seryl-[protein] + H2O = L-seryl-[protein] + phosphate. It carries out the reaction O-phospho-L-threonyl-[protein] + H2O = L-threonyl-[protein] + phosphate. This Oryza sativa subsp. japonica (Rice) protein is Probable protein phosphatase 2C 41.